We begin with the raw amino-acid sequence, 308 residues long: Bifunctional protein FolD (308 aa).

Residue 170–172 (GKG) coordinates NADP(+).

The protein belongs to the tetrahydrofolate dehydrogenase/cyclohydrolase family. Homodimer.

It catalyses the reaction (6R)-5,10-methylene-5,6,7,8-tetrahydrofolate + NADP(+) = (6R)-5,10-methenyltetrahydrofolate + NADPH. It carries out the reaction (6R)-5,10-methenyltetrahydrofolate + H2O = (6R)-10-formyltetrahydrofolate + H(+). It functions in the pathway one-carbon metabolism; tetrahydrofolate interconversion. Catalyzes the oxidation of 5,10-methylenetetrahydrofolate to 5,10-methenyltetrahydrofolate and then the hydrolysis of 5,10-methenyltetrahydrofolate to 10-formyltetrahydrofolate. This Pyrobaculum calidifontis (strain DSM 21063 / JCM 11548 / VA1) protein is Bifunctional protein FolD.